The chain runs to 144 residues: Prefoldin subunit alpha (144 aa).

Belongs to the prefoldin subunit alpha family. In terms of assembly, heterohexamer of two alpha and four beta subunits.

The protein localises to the cytoplasm. Molecular chaperone capable of stabilizing a range of proteins. Seems to fulfill an ATP-independent, HSP70-like function in archaeal de novo protein folding. The polypeptide is Prefoldin subunit alpha (Methanosarcina barkeri (strain Fusaro / DSM 804)).